Here is a 177-residue protein sequence, read N- to C-terminus: MSEFVTVARPYAKAAFDFAVEHQNVDRWQDMLAFAAEVTKNEQMAEMLSGALAPETLAASFIAVCGEQLDTSGQNLIKVMAENGRLRVLPDVLEQFEHLRALSEATAEVEVTSANELSEEQLAKITAAMEKRLSRKVKLNCKIDKSVMAGVIIRAGDMVIDGSVRGRLQRLSDVLQS.

Belongs to the ATPase delta chain family. As to quaternary structure, F-type ATPases have 2 components, F(1) - the catalytic core - and F(0) - the membrane proton channel. F(1) has five subunits: alpha(3), beta(3), gamma(1), delta(1), epsilon(1). F(0) has three main subunits: a(1), b(2) and c(10-14). The alpha and beta chains form an alternating ring which encloses part of the gamma chain. F(1) is attached to F(0) by a central stalk formed by the gamma and epsilon chains, while a peripheral stalk is formed by the delta and b chains.

The protein resides in the cell inner membrane. In terms of biological role, f(1)F(0) ATP synthase produces ATP from ADP in the presence of a proton or sodium gradient. F-type ATPases consist of two structural domains, F(1) containing the extramembraneous catalytic core and F(0) containing the membrane proton channel, linked together by a central stalk and a peripheral stalk. During catalysis, ATP synthesis in the catalytic domain of F(1) is coupled via a rotary mechanism of the central stalk subunits to proton translocation. This protein is part of the stalk that links CF(0) to CF(1). It either transmits conformational changes from CF(0) to CF(1) or is implicated in proton conduction. The polypeptide is ATP synthase subunit delta (Enterobacter sp. (strain 638)).